We begin with the raw amino-acid sequence, 610 residues long: DNA mismatch repair protein MutL (610 aa).

It belongs to the DNA mismatch repair MutL/HexB family.

In terms of biological role, this protein is involved in the repair of mismatches in DNA. It is required for dam-dependent methyl-directed DNA mismatch repair. May act as a 'molecular matchmaker', a protein that promotes the formation of a stable complex between two or more DNA-binding proteins in an ATP-dependent manner without itself being part of a final effector complex. This is DNA mismatch repair protein MutL from Rickettsia conorii (strain ATCC VR-613 / Malish 7).